The chain runs to 99 residues: Class II hydrophobin 1 (99 aa).

The N-terminal stretch at 1-26 (MKFIAVVAALTASLAMAAPTESSTDT) is a signal peptide. Intrachain disulfides connect Cys-31–Cys-80, Cys-41–Cys-71, Cys-42–Cys-54, and Cys-81–Cys-92.

Belongs to the cerato-ulmin hydrophobin family. As to quaternary structure, homotetramer. Further self-assembles to form highly ordered films at water-air interfaces through intermolecular interactions.

It localises to the secreted. The protein resides in the cell wall. Functionally, aerial growth, conidiation, and dispersal of filamentous fungi in the environment rely upon a capability of their secreting small amphipathic proteins called hydrophobins (HPBs) with low sequence identity. Class I can self-assemble into an outermost layer of rodlet bundles on aerial cell surfaces, conferring cellular hydrophobicity that supports fungal growth, development and dispersal; whereas Class II form highly ordered films at water-air interfaces through intermolecular interactions but contribute nothing to the rodlet structure. HFB1 is a class II hydrophobin that shows antifungal activity against pathogenic and opportunistic fungi such as Cryptococcus neoformans, Nakaseomyces glabrataa, or Candida tropicalis. This Sodiomyces alkalinus (strain CBS 110278 / VKM F-3762 / F11) (Alkaliphilic filamentous fungus) protein is Class II hydrophobin 1.